The sequence spans 25 residues: Xenoposin precursor fragment R2 (25 aa).

Expressed by the skin glands.

It is found in the secreted. Functionally, antimicrobial peptide. The sequence is that of Xenoposin precursor fragment R2 from Xenopus ruwenzoriensis (Uganda clawed frog).